Reading from the N-terminus, the 344-residue chain is tRNA N6-adenosine threonylcarbamoyltransferase (344 aa).

Fe cation is bound by residues histidine 115 and histidine 119. Residues 137 to 141 (LVSGG), aspartate 170, glycine 183, aspartate 187, and asparagine 276 each bind substrate. Aspartate 306 serves as a coordination point for Fe cation.

Belongs to the KAE1 / TsaD family. Fe(2+) serves as cofactor.

It localises to the cytoplasm. It carries out the reaction L-threonylcarbamoyladenylate + adenosine(37) in tRNA = N(6)-L-threonylcarbamoyladenosine(37) in tRNA + AMP + H(+). Functionally, required for the formation of a threonylcarbamoyl group on adenosine at position 37 (t(6)A37) in tRNAs that read codons beginning with adenine. Is involved in the transfer of the threonylcarbamoyl moiety of threonylcarbamoyl-AMP (TC-AMP) to the N6 group of A37, together with TsaE and TsaB. TsaD likely plays a direct catalytic role in this reaction. This chain is tRNA N6-adenosine threonylcarbamoyltransferase, found in Limosilactobacillus fermentum (strain NBRC 3956 / LMG 18251) (Lactobacillus fermentum).